The chain runs to 703 residues: MLGTLTPLSSLLLLLLVLVLGCGPRASSGGGAGGAAGYAPVKYIQPMQKGPVGPPFREGKGQYLEMPLPLLPMDLKGEPGPPGKPGPRGPPGPPGFPGKPGMGKPGLHGQPGPAGPPGFSRMGKAGPPGLPGKVGPPGQPGLRGEPGIRGDQGLRGPPGPPGLPGPSGITIPGKPGAQGVPGPPGFQGEPGPQGEPGPPGDRGLKGDNGVGQPGLPGAPGQGGAPGPPGLPGPAGLGKPGLDGLPGAPGDKGESGPPGVPGPRGEPGAVGPKGPPGVDGVGVPGAAGLPGPQGPSGAKGEPGTRGPPGLIGPTGYGMPGLPGPKGDRGPAGVPGLLGDRGEPGEDGEPGEQGPQGLGGPPGLPGSAGLPGRRGPPGPKGEAGPGGPPGVPGIRGDQGPSGLAGKPGVPGERGLPGAHGPPGPTGPKGEPGFTGRPGGPGVAGALGQKGDLGLPGQPGLRGPSGIPGLQGPAGPIGPQGLPGLKGEPGLPGPPGEGRAGEPGTAGPTGPPGVPGSPGITGPPGPPGPPGPPGAPGAFDETGIAGLHLPNGGVEGAVLGKGGKPQFGLGELSAHATPAFTAVLTSPFPASGMPVKFDRTLYNGHSGYNPATGIFTCPVGGVYYFAYHVHVKGTNVWVALYKNNVPATYTYDEYKKGYLDQASGGAVLQLRPNDQVWVQMPSDQANGLYSTEYIHSSFSGFLLCPT.

Residues 1 to 28 (MLGTLTPLSSLLLLLLVLVLGCGPRASS) form the signal peptide. The segment at 29–76 (GGGAGGAAGYAPVKYIQPMQKGPVGPPFREGKGQYLEMPLPLLPMDLK) is nonhelical region (NC2). Residues 70–544 (LLPMDLKGEP…AFDETGIAGL (475 aa)) are disordered. The triple-helical region stretch occupies residues 77 to 536 (GEPGPPGKPG…PGPPGAPGAF (460 aa)). The segment covering 79–97 (PGPPGKPGPRGPPGPPGFP) has biased composition (pro residues). The span at 166–192 (PSGITIPGKPGAQGVPGPPGFQGEPGP) shows a compositional bias: low complexity. The span at 206–224 (GDNGVGQPGLPGAPGQGGA) shows a compositional bias: gly residues. Low complexity-rich tracts occupy residues 265–275 (EPGAVGPKGPP) and 285–297 (AAGLPGPQGPSGA). Gly residues predominate over residues 433-442 (GRPGGPGVAG). 2 stretches are compositionally biased toward low complexity: residues 444 to 462 (LGQKGDLGLPGQPGLRGPS) and 476 to 486 (PQGLPGLKGEP). Over residues 506 to 532 (TGPPGVPGSPGITGPPGPPGPPGPPGA) the composition is skewed to pro residues. Residues 537–703 (DETGIAGLHL…SFSGFLLCPT (167 aa)) form a nonhelical region (NC1) region. Residues 570–703 (SAHATPAFTA…SFSGFLLCPT (134 aa)) form the C1q domain.

In terms of assembly, homotrimers, or heterotrimers in association with alpha 2(VIII) type collagens. Four homotrimers can form a tetrahedron stabilized by central interacting C-terminal NC1 trimers. Post-translationally, proteolytically cleaved by neutrophil elastase, in vitro. Prolines at the third position of the tripeptide repeating unit (G-X-Y) are hydroxylated in some or all of the chains. In terms of tissue distribution, expressed primarily in the subendothelium of large blood vessels. Also expressed in arterioles and venules in muscle, heart, kidney, spleen, umbilical cord, liver and lung and is also found in connective tissue layers around hair follicles, around nerve bundles in muscle, in the dura of the optic nerve, in cornea and sclera, and in the perichondrium of cartilaginous tissues. In the kidney, expressed in mesangial cells, glomerular endothelial cells, and tubular epithelial cells. Also expressed in mast cells, and in astrocytes during the repair process. Expressed in Descemet's membrane.

Its subcellular location is the secreted. It localises to the extracellular space. It is found in the extracellular matrix. The protein localises to the basement membrane. Macromolecular component of the subendothelium. Major component of the Descemet's membrane (basement membrane) of corneal endothelial cells. Also a component of the endothelia of blood vessels. Necessary for migration and proliferation of vascular smooth muscle cells and thus, has a potential role in the maintenance of vessel wall integrity and structure, in particular in atherogenesis. The sequence is that of Collagen alpha-2(VIII) chain (COL8A2) from Homo sapiens (Human).